Here is a 208-residue protein sequence, read N- to C-terminus: Large ribosomal subunit protein bL25 (208 aa).

The protein belongs to the bacterial ribosomal protein bL25 family. CTC subfamily. As to quaternary structure, part of the 50S ribosomal subunit; part of the 5S rRNA/L5/L18/L25 subcomplex. Contacts the 5S rRNA. Binds to the 5S rRNA independently of L5 and L18.

Functionally, this is one of the proteins that binds to the 5S RNA in the ribosome where it forms part of the central protuberance. The chain is Large ribosomal subunit protein bL25 from Acidovorax ebreus (strain TPSY) (Diaphorobacter sp. (strain TPSY)).